We begin with the raw amino-acid sequence, 229 residues long: 3-isopropylmalate dehydratase small subunit (229 aa).

A disordered region spans residues 208–229; the sequence is KIESAREPDDDWTGPLADRGII.

The protein belongs to the LeuD family. LeuD type 1 subfamily. In terms of assembly, heterodimer of LeuC and LeuD.

The catalysed reaction is (2R,3S)-3-isopropylmalate = (2S)-2-isopropylmalate. The protein operates within amino-acid biosynthesis; L-leucine biosynthesis; L-leucine from 3-methyl-2-oxobutanoate: step 2/4. Its function is as follows. Catalyzes the isomerization between 2-isopropylmalate and 3-isopropylmalate, via the formation of 2-isopropylmaleate. The chain is 3-isopropylmalate dehydratase small subunit from Bifidobacterium longum subsp. infantis (strain ATCC 15697 / DSM 20088 / JCM 1222 / NCTC 11817 / S12).